The chain runs to 543 residues: Acrosin-binding protein (543 aa).

An N-terminal signal peptide occupies residues 1-25; that stretch reads MRKPAAGFLPSLLKVLLLPLAPAAA. The interval 26–106 is pro-ACR binding; sequence QDSTQASTPG…ASWFESFCQF (81 aa). A propeptide spans 26–273 (removed in mature form); that stretch reads QDSTQASTPG…NPSSFAPRVR (248 aa). The segment at 185–272 is disordered; it reads SLGGQEQAPE…SNPSSFAPRV (88 aa). The segment covering 192–220 has biased composition (basic and acidic residues); the sequence is APEHKQEQGVEHRQEPTQEHKQEEGQKQE. Residues 221-231 show a composition bias toward acidic residues; sequence EQEEEQEEEGK. Residues 232–243 are compositionally biased toward basic and acidic residues; sequence QEEGQGTKEGRE. The tract at residues 319–427 is pro-ACR binding; sequence LPHTEALLVL…NQVGSPESGR (109 aa).

Binds proacrosin (pro-ACR). Does not bind the mature form of ACR. Post-translationally, phosphorylated on Tyr residues in capacitated sperm. The N-terminus is blocked. In terms of processing, synthesized as a 60-kDa precursor, the 32-kDa mature form is post-translationally produced by the removal of the N-terminal half of the precursor during sperm maturation in the testis and/or epididymis. Expression restricted to testis in normal tissue. Expressed in a wide spectrum of cancers, including bladder, breast, liver, lung and colon cancers.

Its subcellular location is the secreted. The protein localises to the cytoplasmic vesicle. It localises to the secretory vesicle. The protein resides in the acrosome. Its function is as follows. Acrosomal protein that maintains proacrosin (pro-ACR) as an enzymatically inactive zymogen in the acrosome. Involved also in the acrosome formation. This chain is Acrosin-binding protein, found in Homo sapiens (Human).